The following is a 379-amino-acid chain: Protein psi1 (379 aa).

Residues 1 to 70 enclose the J domain; sequence MVADTKLYDC…RKLYDQYGIT (70 aa). 2 disordered regions span residues 69 to 95 and 176 to 205; these read ITEGNAAPPPPGAEGGPGAGFGGFPGA and FGGGGAGPHARRSHPSFGGSRPSQPPAQNE. Positions 81–95 are enriched in gly residues; it reads AEGGPGAGFGGFPGA.

Required for nuclear migration during mitosis. It is required for the normal initiation of translation. The sequence is that of Protein psi1 (psi1) from Schizosaccharomyces pombe (strain 972 / ATCC 24843) (Fission yeast).